The following is a 239-amino-acid chain: 1-(5-phosphoribosyl)-5-[(5-phosphoribosylamino)methylideneamino] imidazole-4-carboxamide isomerase (239 aa).

Aspartate 7 functions as the Proton acceptor in the catalytic mechanism. Aspartate 129 serves as the catalytic Proton donor.

Belongs to the HisA/HisF family.

The protein localises to the cytoplasm. It catalyses the reaction 1-(5-phospho-beta-D-ribosyl)-5-[(5-phospho-beta-D-ribosylamino)methylideneamino]imidazole-4-carboxamide = 5-[(5-phospho-1-deoxy-D-ribulos-1-ylimino)methylamino]-1-(5-phospho-beta-D-ribosyl)imidazole-4-carboxamide. The protein operates within amino-acid biosynthesis; L-histidine biosynthesis; L-histidine from 5-phospho-alpha-D-ribose 1-diphosphate: step 4/9. The protein is 1-(5-phosphoribosyl)-5-[(5-phosphoribosylamino)methylideneamino] imidazole-4-carboxamide isomerase of Lactiplantibacillus plantarum (strain ATCC BAA-793 / NCIMB 8826 / WCFS1) (Lactobacillus plantarum).